The following is a 296-amino-acid chain: D-alanine--D-alanine ligase (296 aa).

In terms of domain architecture, ATP-grasp spans 103 to 293 (KEILMHHRMP…FDSFVKRIIE (191 aa)). 129–180 (ISFPVAVKPSSGGSSIATFKVKSIQELKHAYEEASKYGEVMIEQWVTGKEIT) provides a ligand contact to ATP. Mg(2+) is bound by residues Asp-247, Glu-260, and Asn-262.

It belongs to the D-alanine--D-alanine ligase family. Mg(2+) serves as cofactor. Mn(2+) is required as a cofactor.

The protein resides in the cytoplasm. The catalysed reaction is 2 D-alanine + ATP = D-alanyl-D-alanine + ADP + phosphate + H(+). It participates in cell wall biogenesis; peptidoglycan biosynthesis. In terms of biological role, cell wall formation. The sequence is that of D-alanine--D-alanine ligase from Francisella tularensis subsp. tularensis (strain FSC 198).